The chain runs to 382 residues: MQNFLPFSRPAIGSDEINAVVNVLGSGWITTGPQNQQLETDFCAAFGCKHAVAVCSATAGMHITLMALGIGPGDEVITPSQTWVSTINMIVLLGAEPVMVDIDRDTLMVNAADIEAAITSKTKAIIPVHYAGAPCDLDALRQIAQQYKIPLIEDAAHAVGTRYGDQWVGEKGTTIFSFHAIKNITCAEGGLIATDDDELAAKVRRLKFHGLGVDAFDRQIQGRSPQAEVVEPGYKYNLSDIHAAIAVVQLQRLPEINARRQALAARYHQALVDSPLQPLFVPDYAHQHAWHLFMVRVDKERCGIDRDSLMARLKEVGIGSGLHFRAAHTQKYYRERYPSLHLPNTEWNSARLCTLPLFPDMLDSDVDRVVDALATIIGPHRV.

The residue at position 182 (Lys182) is an N6-(pyridoxal phosphate)lysine.

Belongs to the DegT/DnrJ/EryC1 family. ArnB subfamily. Homodimer. It depends on pyridoxal 5'-phosphate as a cofactor.

It catalyses the reaction UDP-4-amino-4-deoxy-beta-L-arabinose + 2-oxoglutarate = UDP-beta-L-threo-pentopyranos-4-ulose + L-glutamate. It functions in the pathway nucleotide-sugar biosynthesis; UDP-4-deoxy-4-formamido-beta-L-arabinose biosynthesis; UDP-4-deoxy-4-formamido-beta-L-arabinose from UDP-alpha-D-glucuronate: step 2/3. Its pathway is bacterial outer membrane biogenesis; lipopolysaccharide biosynthesis. In terms of biological role, catalyzes the conversion of UDP-4-keto-arabinose (UDP-Ara4O) to UDP-4-amino-4-deoxy-L-arabinose (UDP-L-Ara4N). The modified arabinose is attached to lipid A and is required for resistance to polymyxin and cationic antimicrobial peptides. This is UDP-4-amino-4-deoxy-L-arabinose--oxoglutarate aminotransferase from Yersinia enterocolitica serotype O:8 / biotype 1B (strain NCTC 13174 / 8081).